Reading from the N-terminus, the 313-residue chain is Biotin synthase (313 aa).

The Radical SAM core domain occupies 28 to 258 (NFGNDIELCS…LFPQARLRLS (231 aa)). [4Fe-4S] cluster-binding residues include C46, C50, and C53. [2Fe-2S] cluster is bound by residues C90, C121, C181, and R256.

The protein belongs to the radical SAM superfamily. Biotin synthase family. Homodimer. It depends on [4Fe-4S] cluster as a cofactor. The cofactor is [2Fe-2S] cluster.

The catalysed reaction is (4R,5S)-dethiobiotin + (sulfur carrier)-SH + 2 reduced [2Fe-2S]-[ferredoxin] + 2 S-adenosyl-L-methionine = (sulfur carrier)-H + biotin + 2 5'-deoxyadenosine + 2 L-methionine + 2 oxidized [2Fe-2S]-[ferredoxin]. The protein operates within cofactor biosynthesis; biotin biosynthesis; biotin from 7,8-diaminononanoate: step 2/2. In terms of biological role, catalyzes the conversion of dethiobiotin (DTB) to biotin by the insertion of a sulfur atom into dethiobiotin via a radical-based mechanism. The chain is Biotin synthase from Francisella philomiragia subsp. philomiragia (strain ATCC 25017 / CCUG 19701 / FSC 153 / O#319-036).